Consider the following 1189-residue polypeptide: Ras-specific guanine nucleotide-releasing factor 2 (1189 aa).

Positions 22–133 (EGTKRGFLSK…WMEAIHQASY (112 aa)) constitute a PH 1 domain. Residues 158 to 193 (KIATNQLRHQLEDQDTEIERLKSEIVALNKTKERMR) are a coiled coil. An IQ domain is found at 205–234 (DIKKIKKVQSFMRGWLCRRKWKTIVQDYIC). One can recognise a DH domain in the interval 243 to 429 (KRNQIVFTMV…EELSRVMHDE (187 aa)). The PH 2 domain maps to 470–588 (PSVERGKLSK…WMSDISQCVD (119 aa)). The N-terminal Ras-GEF domain occupies 635-755 (KVPQIRYASV…LTSSLNSRIG (121 aa)). The interval 713 to 738 (VDGKSPRLCRKFSSPPPLAVSRTSSP) is disordered. Ser725 and Ser726 each carry phosphoserine. Position 736 is a phosphoserine; by CDK5 (Ser736). A regulates proteasomal degradation region spans residues 743 to 751 (KLSLTSSLN). Phosphoserine occurs at positions 745 and 749. Positions 757 to 817 (LDLTNSSSSS…TPRHLRYRQP (61 aa)) are disordered. A compositionally biased stretch (low complexity) spans 762 to 776 (SSSSSSPTTTTHSPA). Phosphoserine occurs at positions 801, 805, and 924. Residues 954–1186 (SAMELAEQIT…YELSLKIEPR (233 aa)) enclose the Ras-GEF domain. Residues 1051–1080 (ALNRSAIYRLKKTWAKVSKQTKALMDKLQK) form a responsible of the affinity for farnesylated versus geranylgeranylated Ras region.

Homooligomer and heterooligomer with RASGRF1. Interacts with Ras and RAC1. Interacts in a calcium-dependent manner with calmodulin. Interacts with EPB49 and probably CDK5R1. Interacts with the AMPA receptor through GRIA1. Interacts with microtubules. In terms of processing, phosphorylated by CDK5; down-regulates RASGRF2-mediated RAC1 activation. Post-translationally, ubiquitinated upon interaction with Ras. Ubiquitination leads to degradation through the 26S proteasome. In terms of tissue distribution, expressed in brain in the nucleus of the solitary tract. Not observed in the hippocampus (at protein level).

The protein localises to the cytoplasm. Its subcellular location is the cell membrane. It localises to the endoplasmic reticulum membrane. In terms of biological role, functions as a calcium-regulated nucleotide exchange factor activating both Ras and RAC1 through the exchange of bound GDP for GTP. Preferentially activates HRAS in vivo compared to RRAS based on their different types of prenylation. Functions in synaptic plasticity by contributing to the induction of long term potentiation. This is Ras-specific guanine nucleotide-releasing factor 2 (Rasgrf2) from Mus musculus (Mouse).